A 284-amino-acid chain; its full sequence is Tropomyosin (284 aa).

Residues 1 to 284 are a coiled coil; sequence MDAIKKKMQA…DQTFQELFGY (284 aa). A compositionally biased stretch (basic and acidic residues) spans 113 to 142; the sequence is LEKATHTADESDRVRKVMENRSFQDEERAN. The disordered stretch occupies residues 113–143; it reads LEKATHTADESDRVRKVMENRSFQDEERANT.

It belongs to the tropomyosin family.

Tropomyosin, in association with the troponin complex, plays a central role in the calcium dependent regulation of muscle contraction. The protein is Tropomyosin of Acanthocheilonema viteae (Filarial nematode worm).